Reading from the N-terminus, the 455-residue chain is Histone chaperone RTT106 (455 aa).

Ser-2 carries the post-translational modification N-acetylserine. Residues 2–67 (SKLFLDELPE…SSDLLKTDEI (66 aa)) form a dimeric region region. 2 consecutive PH domains span residues 68-200 (SETN…GFKI) and 217-301 (INSF…VKRK). The interval 68-301 (SETNTIFKLE…AKIDDYVKRK (234 aa)) is double PH domain. A compositionally biased stretch (basic and acidic residues) spans 305-314 (DKSMSEELKA). Positions 305–455 (DKSMSEELKA…DEDGSGVEYD (151 aa)) are disordered. The segment covering 319–339 (KGQATDGTADQPSILQEATRQ) has biased composition (polar residues). Composition is skewed to acidic residues over residues 350 to 366 (SDDD…ESDL) and 376 to 395 (DGAE…DEEE). Residues 402–418 (ALNRDNSFASINGQPEQ) show a composition bias toward polar residues. 2 positions are modified to phosphoserine: Ser-408 and Ser-411. Basic and acidic residues predominate over residues 420–429 (LQYKEFKEPL). The span at 430-455 (ELEDIPIEIDNDDDEDDEDGSGVEYD) shows a compositional bias: acidic residues. The residue at position 450 (Ser-450) is a Phosphoserine.

It belongs to the RTT106 family. In terms of assembly, homodimers (via the N-terminal domain). Interacts with the SWI/SNF complex. Interacts with the RSC complex. Interacts with the HIR complex. Interacts with the CAF-1 complex. Interacts with RLF2. Interacts with SIR4. Interacts with YTA7. Interacts with CAC2. Interacts with HPC2. Interacts with HIR2. Interacts with MSI1. Interacts with HIR1. Interacts with histone H3. Interacts with histone H4.

It is found in the nucleus. Its subcellular location is the chromosome. In terms of biological role, histones H3 and H4 chaperone involved in the nucleosome formation and heterochromatin silencing. Required for the deposition of H3K56ac-carrying H3-H4 complex onto newly-replicated DNA. Plays a role in the transcriptional regulation of the cell-cycle dependent histone genes by directly recruiting the SWI/SNF and RSC chromatin remodeling complexes to the histone genes in a cell cycle dependent manner. In cooperation with HIR and ASF1, creates a repressive structure at the core histone gene promoter and contributes to their repression outside of S phase. Involved in regulation of Ty1 transposition. The polypeptide is Histone chaperone RTT106 (Saccharomyces cerevisiae (strain ATCC 204508 / S288c) (Baker's yeast)).